The sequence spans 466 residues: Signal recognition particle 54 kDa protein (466 aa).

GTP-binding positions include G104–T111, D184–R188, and T242–D245. Positions Q446–G466 are disordered. Positions Q448–G466 are enriched in gly residues.

Belongs to the GTP-binding SRP family. SRP54 subfamily. In terms of assembly, part of the signal recognition particle protein translocation system, which is composed of SRP and FtsY. Archaeal SRP consists of a 7S RNA molecule of 300 nucleotides and two protein subunits: SRP54 and SRP19.

It localises to the cytoplasm. It catalyses the reaction GTP + H2O = GDP + phosphate + H(+). Involved in targeting and insertion of nascent membrane proteins into the cytoplasmic membrane. Binds to the hydrophobic signal sequence of the ribosome-nascent chain (RNC) as it emerges from the ribosomes. The SRP-RNC complex is then targeted to the cytoplasmic membrane where it interacts with the SRP receptor FtsY. The protein is Signal recognition particle 54 kDa protein of Haloquadratum walsbyi (strain DSM 16790 / HBSQ001).